Here is a 174-residue protein sequence, read N- to C-terminus: V-type proton ATPase catalytic subunit A (174 aa).

Belongs to the ATPase alpha/beta chains family. As to quaternary structure, V-ATPase is a heteromultimeric enzyme made up of two complexes: the ATP-hydrolytic V1 complex and the proton translocation V0 complex. The V1 complex consists of three catalytic AB heterodimers that form a heterohexamer, three peripheral stalks each consisting of EG heterodimers, one central rotor including subunits D and F, and the regulatory subunits C and H. The proton translocation complex V0 consists of the proton transport subunit a, a ring of proteolipid subunits c9c'', rotary subunit d, subunits e and f, and the accessory subunits ATP6AP1/Ac45 and ATP6AP2/PRR. Interacts with the V0 complex V-ATPase subunit a4 ATP6V0A4. Interacts with WFS1. Interacts with alpha-crystallin B chain/CRYAB and with MTOR, forming a ternary complex.

The protein localises to the cytoplasm. The protein resides in the cytosol. It localises to the cytoplasmic vesicle. Its subcellular location is the secretory vesicle. It is found in the clathrin-coated vesicle membrane. The protein localises to the lysosome. It carries out the reaction ATP + H2O + 4 H(+)(in) = ADP + phosphate + 5 H(+)(out). ATP hydrolysis occurs at the interface between the nucleotide-binding domains of subunits A and B. ATP hydrolysis triggers a conformational change in the subunits D and F, which induces a shift of subunit d. The c-ring is subsequently rotated and results in a continuous proton translocation across the membrane. Catalytic subunit of the V1 complex of vacuolar(H+)-ATPase (V-ATPase), a multisubunit enzyme composed of a peripheral complex (V1) that hydrolyzes ATP and a membrane integral complex (V0) that translocates protons. V-ATPase is responsible for acidifying and maintaining the pH of intracellular compartments and in some cell types, is targeted to the plasma membrane, where it is responsible for acidifying the extracellular environment. In aerobic conditions, involved in intracellular iron homeostasis, thus triggering the activity of Fe(2+) prolyl hydroxylase (PHD) enzymes, and leading to HIF1A hydroxylation and subsequent proteasomal degradation. May play a role in neurite development and synaptic connectivity. This Mesocricetus auratus (Golden hamster) protein is V-type proton ATPase catalytic subunit A.